A 533-amino-acid polypeptide reads, in one-letter code: Probable intron-encoded endonuclease 3 (533 aa).

Transmembrane regions (helical) follow at residues 1–21, 30–50, and 81–101; these read MYLS…FFGR, LITC…FFEV, and LTVA…IYSI. A ndh-5 exon 1 encoded region spans residues 1 to 108; the sequence is MYLSIIILPL…YSISYMSHDP (108 aa). Residues 109–533 are ndh-5 intron 1 encoded; sequence RGRVRGKRVY…SISLLLGRRR (425 aa).

This sequence in the N-terminal section; belongs to the complex I subunit 5 family. The protein in the C-terminal section; belongs to the LAGLIDADG endonuclease family.

Its subcellular location is the mitochondrion membrane. Its function is as follows. Mitochondrial DNA endonuclease involved in intron homing. The sequence is that of Probable intron-encoded endonuclease 3 from Neurospora crassa (strain ATCC 24698 / 74-OR23-1A / CBS 708.71 / DSM 1257 / FGSC 987).